The following is a 253-amino-acid chain: Probable transcriptional regulatory protein syc0529_d (253 aa).

This sequence belongs to the TACO1 family.

The protein localises to the cytoplasm. This chain is Probable transcriptional regulatory protein syc0529_d, found in Synechococcus sp. (strain ATCC 27144 / PCC 6301 / SAUG 1402/1) (Anacystis nidulans).